The sequence spans 562 residues: NAD-dependent malic enzyme (562 aa).

The active-site Proton donor is tyrosine 101. Residue arginine 154 coordinates NAD(+). Lysine 172 functions as the Proton acceptor in the catalytic mechanism. A divalent metal cation contacts are provided by glutamate 243, aspartate 244, and aspartate 267. NAD(+) is bound by residues aspartate 267 and asparagine 415.

It belongs to the malic enzymes family. Homotetramer. The cofactor is Mg(2+). It depends on Mn(2+) as a cofactor.

The catalysed reaction is (S)-malate + NAD(+) = pyruvate + CO2 + NADH. The enzyme catalyses oxaloacetate + H(+) = pyruvate + CO2. The polypeptide is NAD-dependent malic enzyme (Vibrio campbellii (strain ATCC BAA-1116)).